The following is a 532-amino-acid chain: KICSTOR complex protein ITFG2 (532 aa).

Residues 19–48 form an FG-GAP 1; atypical repeat; the sequence is FPHAICLGDVDNDTLNELVVGDTSGKLSVY. Phosphoserine is present on S104. One copy of the FG-GAP 2; atypical repeat lies at 126-155; the sequence is NTKVMLISDIDGDGRCELVVGYTDRVVRAF. Residues 248-271 form a disordered region; it reads PHPQQERLHSPHRQHQASHSPDSS.

Part of the KICSTOR complex composed of KPTN, ITFG2, KICS2 and SZT2. SZT2 probably serves as a link between the other three proteins in the KICSTOR complex and may mediate the direct interaction with the GATOR complex via GATOR1. The KICSTOR complex interacts directly with the GATOR1 complex and most probably indirectly with the GATOR2 complex in an amino acid-independent manner.

The protein resides in the lysosome membrane. Functionally, as part of the KICSTOR complex functions in the amino acid-sensing branch of the TORC1 signaling pathway. Recruits, in an amino acid-independent manner, the GATOR1 complex to the lysosomal membranes and allows its interaction with GATOR2 and the RAG GTPases. Functions upstream of the RAG GTPases and is required to negatively regulate mTORC1 signaling in absence of amino acids. In absence of the KICSTOR complex mTORC1 is constitutively localized to the lysosome and activated. The KICSTOR complex is also probably involved in the regulation of mTORC1 by glucose. The protein is KICSTOR complex protein ITFG2 of Bos taurus (Bovine).